The sequence spans 154 residues: Keratin-associated protein 9-4 (154 aa).

Repeat copies occupy residues 8-12 (CCQPT), 13-17 (CCRTT), 18-22 (CCRTT), 37-41 (CCQPS), 42-46 (CCVSS), 51-55 (CCRPT), 56-60 (CCQNT), 61-65 (CCQPT), 70-74 (CCQPS), 75-79 (CCSTP), 80-84 (CCQPT), 85-89 (CCGSS), 129-133 (CCRPA), 134-138 (CCETT), and 148-152 (CCQPF). Residues 8-152 (CCQPTCCRTT…TCVSSCCQPF (145 aa)) form a 15 X 5 AA repeats of C-C-[RQVGE]-[SPTN]-[TASPF] region.

This sequence belongs to the KRTAP type 9 family. In terms of assembly, interacts with hair keratins.

Its function is as follows. In the hair cortex, hair keratin intermediate filaments are embedded in an interfilamentous matrix, consisting of hair keratin-associated proteins (KRTAP), which are essential for the formation of a rigid and resistant hair shaft through their extensive disulfide bond cross-linking with abundant cysteine residues of hair keratins. The matrix proteins include the high-sulfur and high-glycine-tyrosine keratins. This Homo sapiens (Human) protein is Keratin-associated protein 9-4 (KRTAP9-4).